The primary structure comprises 2602 residues: Filamin-B (2602 aa).

The segment at 1–239 (MPVTEKDLAE…VMTYLSQFPK (239 aa)) is actin-binding. Calponin-homology (CH) domains lie at 16–122 (KIQQ…LHYS) and 139–242 (QTPK…KAKL). Residue Thr-216 is modified to Phosphothreonine. Residues 244 to 267 (PGAPLKPKLNPKKARAYGRGIEPT) are disordered. Filamin repeat units follow at residues 249–347 (KPKL…EVNV), 349–446 (KAQG…GVQI), 447–543 (GEAC…EVQV), 544–636 (GPEA…MAFI), 640–736 (TGDY…RVNI), 737–839 (GQGS…RVKV), 840–938 (DPSH…TVGV), 939–1034 (AAPL…TVEA), 1035–1127 (SLPP…KADI), 1128–1222 (EMPF…WVKV), 1223–1322 (EPAI…KVAV), 1323–1415 (TEGC…RVPS), 1416–1511 (KDVV…KVKV), 1512–1608 (LPTY…RIRA), and 1609–1704 (TQTG…TVMA). Thr-519 carries the phosphothreonine modification. Lys-681 bears the N6-acetyllysine mark. Ser-730 is subject to Phosphoserine. Positions 837–850 (VKVDPSHDASKVKA) are enriched in basic and acidic residues. Positions 837 to 862 (VKVDPSHDASKVKAEGPGLSKAGVEN) are disordered. Phosphoserine is present on residues Ser-886, Ser-932, Ser-983, and Ser-1028. Residue Thr-1307 is modified to Phosphothreonine. Ser-1316 is subject to Phosphoserine. A phosphoserine mark is found at Ser-1433, Ser-1505, and Ser-1602. The hinge 1 stretch occupies residues 1705–1728 (TDGEVTAMEEAPVNACPPGFRPWV). Filamin repeat units lie at residues 1729–1813 (TEEA…SPLQ), 1816–1908 (VNYP…TAKI), 1919–1994 (KLGS…SIMV), 1997–2089 (SEIG…TVKI), 2091–2185 (GEGR…QFTV), 2188–2280 (LGEG…LVPV), 2282–2375 (APSD…KVRV), and 2379–2471 (GQAG…KAKV). Lys-1780 carries the N6-acetyllysine modification. 2 positions are modified to phosphoserine: Ser-2083 and Ser-2113. Ser-2369 and Ser-2465 each carry phosphoserine. Residue Lys-2468 forms a Glycyl lysine isopeptide (Lys-Gly) (interchain with G-Cter in ISG15) linkage. Residues 2472–2506 (TGQRLVSPGSANETSSILVESVTRSSTETCYSAIP) form a hinge 2 region. The tract at residues 2472–2602 (TGQRLVSPGS…PGSPFHVTVP (131 aa)) is self-association site, tail. A phosphoserine mark is found at Ser-2478, Ser-2481, and Ser-2492. Residues 2507–2601 (KSSSDASKVT…IPGSPFHVTV (95 aa)) form a Filamin 24 repeat. An N6-succinyllysine mark is found at Lys-2518 and Lys-2524. Lys-2576 carries the N6-acetyllysine modification.

The protein belongs to the filamin family. In terms of assembly, homodimer. Interacts with FLNA, FLNC, INPPL1, ITGB1A, ITGB1D, ITGB3, ITGB6, MYOT, MYOZ1, PSEN1 and PSEN2. Interacts with MICALL2. Interacts with RFLNA and RFLNB. Interacts with ASB2 isoform 1; the interaction targets FLNB for proteasomal degradation. In terms of processing, ISGylation prevents ability to interact with the upstream activators of the JNK cascade and inhibits IFNA-induced JNK signaling. Post-translationally, ubiquitination by a SCF-like complex containing ASB2 isoform 1 leads to proteasomal degradation which promotes muscle differentiation. Expressed in hippocampus, cortex, cerebellar Purkinje cells and granule cell layers.

The protein resides in the cytoplasm. Its subcellular location is the cell cortex. It localises to the cytoskeleton. The protein localises to the stress fiber. It is found in the myofibril. The protein resides in the sarcomere. Its subcellular location is the z line. Connects cell membrane constituents to the actin cytoskeleton. May promote orthogonal branching of actin filaments and links actin filaments to membrane glycoproteins. Anchors various transmembrane proteins to the actin cytoskeleton. In Mus musculus (Mouse), this protein is Filamin-B (Flnb).